Here is a 349-residue protein sequence, read N- to C-terminus: Phosphoribosylformylglycinamidine cyclo-ligase (349 aa).

This sequence belongs to the AIR synthase family.

It localises to the cytoplasm. The catalysed reaction is 2-formamido-N(1)-(5-O-phospho-beta-D-ribosyl)acetamidine + ATP = 5-amino-1-(5-phospho-beta-D-ribosyl)imidazole + ADP + phosphate + H(+). The protein operates within purine metabolism; IMP biosynthesis via de novo pathway; 5-amino-1-(5-phospho-D-ribosyl)imidazole from N(2)-formyl-N(1)-(5-phospho-D-ribosyl)glycinamide: step 2/2. The protein is Phosphoribosylformylglycinamidine cyclo-ligase of Psychrobacter arcticus (strain DSM 17307 / VKM B-2377 / 273-4).